A 227-amino-acid polypeptide reads, in one-letter code: ATP-dependent dethiobiotin synthetase BioD (227 aa).

13 to 18 is an ATP binding site; sequence DIGKTY. Residue Thr17 coordinates Mg(2+). The active site involves Lys38. Ser42 serves as a coordination point for substrate. ATP-binding positions include Asp55, 116–119, and 179–180; these read EGSG and NN. Residues Asp55 and Glu116 each coordinate Mg(2+).

The protein belongs to the dethiobiotin synthetase family. In terms of assembly, homodimer. Mg(2+) serves as cofactor.

Its subcellular location is the cytoplasm. The enzyme catalyses (7R,8S)-7,8-diammoniononanoate + CO2 + ATP = (4R,5S)-dethiobiotin + ADP + phosphate + 3 H(+). It participates in cofactor biosynthesis; biotin biosynthesis; biotin from 7,8-diaminononanoate: step 1/2. Its function is as follows. Catalyzes a mechanistically unusual reaction, the ATP-dependent insertion of CO2 between the N7 and N8 nitrogen atoms of 7,8-diaminopelargonic acid (DAPA, also called 7,8-diammoniononanoate) to form a ureido ring. The sequence is that of ATP-dependent dethiobiotin synthetase BioD from Clostridium botulinum (strain Alaska E43 / Type E3).